We begin with the raw amino-acid sequence, 137 residues long: Holo-[acyl-carrier-protein] synthase (137 aa).

Positions 8 and 57 each coordinate Mg(2+).

This sequence belongs to the P-Pant transferase superfamily. AcpS family. Requires Mg(2+) as cofactor.

It localises to the cytoplasm. It catalyses the reaction apo-[ACP] + CoA = holo-[ACP] + adenosine 3',5'-bisphosphate + H(+). Functionally, transfers the 4'-phosphopantetheine moiety from coenzyme A to a Ser of acyl-carrier-protein. This chain is Holo-[acyl-carrier-protein] synthase, found in Cereibacter sphaeroides (strain ATCC 17023 / DSM 158 / JCM 6121 / CCUG 31486 / LMG 2827 / NBRC 12203 / NCIMB 8253 / ATH 2.4.1.) (Rhodobacter sphaeroides).